The primary structure comprises 507 residues: 2,3-bisphosphoglycerate-independent phosphoglycerate mutase (507 aa).

Residues aspartate 11 and serine 61 each contribute to the Mn(2+) site. Serine 61 serves as the catalytic Phosphoserine intermediate. Substrate contacts are provided by residues histidine 122, 152–153 (RD), arginine 183, arginine 189, 258–261 (RNDR), and lysine 332. Positions 399, 403, 440, 441, and 458 each coordinate Mn(2+).

It belongs to the BPG-independent phosphoglycerate mutase family. In terms of assembly, monomer. Mn(2+) is required as a cofactor.

It catalyses the reaction (2R)-2-phosphoglycerate = (2R)-3-phosphoglycerate. It participates in carbohydrate degradation; glycolysis; pyruvate from D-glyceraldehyde 3-phosphate: step 3/5. Functionally, catalyzes the interconversion of 2-phosphoglycerate and 3-phosphoglycerate. The sequence is that of 2,3-bisphosphoglycerate-independent phosphoglycerate mutase from Parabacteroides distasonis (strain ATCC 8503 / DSM 20701 / CIP 104284 / JCM 5825 / NCTC 11152).